Reading from the N-terminus, the 457-residue chain is Acetylcholine receptor subunit alpha-1-B (457 aa).

The first 20 residues, 1 to 20 (MDYTASCLIFLFIAAGTVFG), serve as a signal peptide directing secretion. The Extracellular portion of the chain corresponds to 21–230 (TDHETRLIGD…ITYHFVLQRL (210 aa)). Intrachain disulfides connect Cys148-Cys162 and Cys212-Cys213. A glycan (N-linked (GlcNAc...) asparagine) is linked at Asn161. The next 3 helical transmembrane spans lie at 231–255 (PLYFIVNVIIPCLLFSFLTGLVFYL), 263–281 (MTLSISVLLSLTVFLLVIV), and 297–316 (YMLFTMVFVIASIIITVIVI). The Cytoplasmic portion of the chain corresponds to 317-428 (NTHHRSPSTH…WKFVAMVLDH (112 aa)). The chain crosses the membrane as a helical span at residues 429–447 (ILLAVFMTVCVIGTLAVFA).

Belongs to the ligand-gated ion channel (TC 1.A.9) family. Acetylcholine receptor (TC 1.A.9.1) subfamily. Alpha-1/CHRNA1 sub-subfamily. In terms of assembly, one of the alpha chains that assemble within the acetylcholine receptor, a pentamer of two alpha chains, a beta, a delta, and a gamma or epsilon chains.

It is found in the postsynaptic cell membrane. Its subcellular location is the cell membrane. It carries out the reaction K(+)(in) = K(+)(out). It catalyses the reaction Na(+)(in) = Na(+)(out). In terms of biological role, upon acetylcholine binding, the AChR responds by an extensive change in conformation that affects all subunits and leads to opening of an ion-conducting channel across the plasma membrane. The polypeptide is Acetylcholine receptor subunit alpha-1-B (chrna1-b) (Xenopus laevis (African clawed frog)).